The primary structure comprises 121 residues: Large ribosomal subunit protein bL20 (121 aa).

Belongs to the bacterial ribosomal protein bL20 family.

Functionally, binds directly to 23S ribosomal RNA and is necessary for the in vitro assembly process of the 50S ribosomal subunit. It is not involved in the protein synthesizing functions of that subunit. The protein is Large ribosomal subunit protein bL20 (rplT) of Chlamydia pneumoniae (Chlamydophila pneumoniae).